A 174-amino-acid chain; its full sequence is Actin-related protein 2/3 complex subunit 3 (174 aa).

It belongs to the ARPC3 family. Component of the Arp2/3 complex composed of arp2, act2, arc1/p41-ARC, arc2/p34-ARC, arc3/p21-ARC, arc4/p20-ARC and arc5/p16-ARC.

It is found in the cytoplasm. It localises to the cytoskeleton. The protein resides in the actin patch. Functions as a component of the Arp2/3 complex which is involved in regulation of actin polymerization and together with an activating nucleation-promoting factor (NPF) mediates the formation of branched actin networks. This is Actin-related protein 2/3 complex subunit 3 (arc3) from Schizosaccharomyces pombe (strain 972 / ATCC 24843) (Fission yeast).